The chain runs to 502 residues: Cytochrome P450 CYP94D109 (502 aa).

A helical transmembrane segment spans residues S3–S23. C437 contacts heme.

This sequence belongs to the cytochrome P450 family. As to expression, mainly expressed in leaves and, at low levels, in roots, fruits and stems.

It is found in the membrane. The protein operates within steroid metabolism; cholesterol metabolism. Its function is as follows. Involved in the biosynthesis of spiroketal steroid and saponin natural products from cholesterol such as diosgenin and analogs (e.g. furostanol and spirostanol), plant defense compounds used as main precursors for the industrial production of steroid hormones. During the 5,6-spiroketalization of cholesterol, may catalyze the 27-monohydroxylation of furostanol-type steroid to an intermediate product that undergoes a stereospecific formation of the terminal heterocycle to yield diosgenin. The chain is Cytochrome P450 CYP94D109 from Paris polyphylla (Daiswa polyphylla).